The following is a 122-amino-acid chain: Acidic phospholipase A2 5 (122 aa).

7 disulfide bridges follow: C26-C115, C28-C44, C43-C95, C49-C122, C50-C88, C57-C81, and C75-C86. F27, G29, and G31 together coordinate Ca(2+). H47 is a catalytic residue. D48 contacts Ca(2+). The active site involves D89.

The protein belongs to the phospholipase A2 family. Group II subfamily. D49 sub-subfamily. In terms of assembly, monomer (predominant). Non-covalently linked homodimers are also observed. It depends on Ca(2+) as a cofactor. As to expression, expressed by the venom gland.

It localises to the secreted. It catalyses the reaction a 1,2-diacyl-sn-glycero-3-phosphocholine + H2O = a 1-acyl-sn-glycero-3-phosphocholine + a fatty acid + H(+). Its activity is regulated as follows. Preincubation with heparin slightly increase the enzymatic activity. Functionally, snake venom phospholipase A2 (PLA2) that inhibits platelet aggregation induced by ADP, arachidonic acid and PAF. Acts in a enzymatic independent manner on a proteinase-activated receptor (PAR1, F2R) to evoke calcium release through the inositol 1,4,5-trisphosphate receptor (ITPR1, IP3R) and induces mouse aorta contraction. PAR1, phospholipase C and IP3R inhibitors suppress PA2-induced aorta contraction. PLA2 catalyzes the calcium-dependent hydrolysis of the 2-acyl groups in 3-sn-phosphoglycerides. This chain is Acidic phospholipase A2 5, found in Trimeresurus stejnegeri (Chinese green tree viper).